We begin with the raw amino-acid sequence, 104 residues long: SOSS complex subunit C (104 aa).

Alanine 2 bears the N-acetylalanine mark. Serine 50 bears the Phosphoserine mark.

It belongs to the SOSS-C family. Component of the SOSS complex, composed of SOSS-B (SOSS-B1/NABP2 or SOSS-B2/NABP1), SOSS-A/INTS3 and SOSS-C/INIP. SOSS complexes containing SOSS-B1/NABP2 are more abundant than complexes containing SOSS-B2/NABP1. Interacts with INTS3; the interaction is direct.

The protein localises to the nucleus. Component of the SOSS complex, a multiprotein complex that functions downstream of the MRN complex to promote DNA repair and G2/M checkpoint. The SOSS complex associates with single-stranded DNA at DNA lesions and influences diverse endpoints in the cellular DNA damage response including cell-cycle checkpoint activation, recombinational repair and maintenance of genomic stability. Required for efficient homologous recombination-dependent repair of double-strand breaks (DSBs) and ATM-dependent signaling pathways. This Mus musculus (Mouse) protein is SOSS complex subunit C (Inip).